A 332-amino-acid chain; its full sequence is ATP-dependent (S)-NAD(P)H-hydrate dehydratase (332 aa).

A YjeF C-terminal domain is found at 46 to 326; sequence LLERARNIVP…EQIHNVFDDI (281 aa). (6S)-NADPHX-binding positions include Gly146 and 199-205; that span reads NAIEFCR. Residues 230–234 and 251–260 contribute to the ATP site; these read KGLND and GSGRRCGGQG. Asp261 serves as a coordination point for (6S)-NADPHX.

The protein belongs to the NnrD/CARKD family. Mg(2+) is required as a cofactor.

It carries out the reaction (6S)-NADHX + ATP = ADP + phosphate + NADH + H(+). The enzyme catalyses (6S)-NADPHX + ATP = ADP + phosphate + NADPH + H(+). Catalyzes the dehydration of the S-form of NAD(P)HX at the expense of ATP, which is converted to ADP. Together with NAD(P)HX epimerase, which catalyzes the epimerization of the S- and R-forms, the enzyme allows the repair of both epimers of NAD(P)HX, a damaged form of NAD(P)H that is a result of enzymatic or heat-dependent hydration. The sequence is that of ATP-dependent (S)-NAD(P)H-hydrate dehydratase from Aedes aegypti (Yellowfever mosquito).